The chain runs to 62 residues: Histone H1.2, embryonic (62 aa).

In terms of domain architecture, H15 spans 1–53; the sequence is HVVAAITALKERGGSSMKKQSVFIKKALKSGVEKGTLVQVKGKGASGSFKLGK.

This sequence belongs to the histone H1/H5 family.

It is found in the nucleus. The protein resides in the chromosome. Its function is as follows. Histones H1 are necessary for the condensation of nucleosome chains into higher-order structures. The polypeptide is Histone H1.2, embryonic (Parechinus angulosus (Angulate sea urchin)).